A 401-amino-acid chain; its full sequence is Chaperone protein DnaJ (401 aa).

The region spanning 4–69 (DYYEVLGVSR…DKRRRYDQFG (66 aa)) is the J domain. The CR-type zinc finger occupies 156–237 (GVEKTLKIKK…CYGEGIKQGD (82 aa)). 8 residues coordinate Zn(2+): Cys169, Cys172, Cys185, Cys188, Cys211, Cys214, Cys225, and Cys228. CXXCXGXG motif repeat units follow at residues 169-176 (CKECNGSG), 185-192 (CQTCHGSG), 211-218 (CPTCGGEG), and 225-232 (CTACYGEG). Residues 377–401 (AFSPSGSNNDKEEKSFFEKARDIFS) are disordered. A compositionally biased stretch (basic and acidic residues) spans 385 to 401 (NDKEEKSFFEKARDIFS).

Belongs to the DnaJ family. As to quaternary structure, homodimer. Requires Zn(2+) as cofactor.

It localises to the cytoplasm. Functionally, participates actively in the response to hyperosmotic and heat shock by preventing the aggregation of stress-denatured proteins and by disaggregating proteins, also in an autonomous, DnaK-independent fashion. Unfolded proteins bind initially to DnaJ; upon interaction with the DnaJ-bound protein, DnaK hydrolyzes its bound ATP, resulting in the formation of a stable complex. GrpE releases ADP from DnaK; ATP binding to DnaK triggers the release of the substrate protein, thus completing the reaction cycle. Several rounds of ATP-dependent interactions between DnaJ, DnaK and GrpE are required for fully efficient folding. Also involved, together with DnaK and GrpE, in the DNA replication of plasmids through activation of initiation proteins. The sequence is that of Chaperone protein DnaJ from Chlorobium limicola (strain DSM 245 / NBRC 103803 / 6330).